We begin with the raw amino-acid sequence, 488 residues long: Glutamyl-tRNA(Gln) amidotransferase subunit A (488 aa).

Catalysis depends on charge relay system residues Lys-79 and Ser-159. Residue Ser-183 is the Acyl-ester intermediate of the active site.

The protein belongs to the amidase family. GatA subfamily. Heterotrimer of A, B and C subunits.

The enzyme catalyses L-glutamyl-tRNA(Gln) + L-glutamine + ATP + H2O = L-glutaminyl-tRNA(Gln) + L-glutamate + ADP + phosphate + H(+). Functionally, allows the formation of correctly charged Gln-tRNA(Gln) through the transamidation of misacylated Glu-tRNA(Gln) in organisms which lack glutaminyl-tRNA synthetase. The reaction takes place in the presence of glutamine and ATP through an activated gamma-phospho-Glu-tRNA(Gln). This is Glutamyl-tRNA(Gln) amidotransferase subunit A from Wolbachia pipientis subsp. Culex pipiens (strain wPip).